The following is a 555-amino-acid chain: Bicyclo-germacrene synthase (555 aa).

Residues D311 and E315 each contribute to the Mg(2+) site. The DDXXD motif signature appears at 311-315; it reads DDTYE. Homodimerization stretches follow at residues 316-322 and 392-429; these read YATLDEL and EAKW…VGVG. 2 residues coordinate Mg(2+): D459 and E467.

It belongs to the terpene synthase family. In terms of assembly, homodimer. The cofactor is Mn(2+). Mg(2+) is required as a cofactor. In terms of tissue distribution, expressed in peltate glandular trichomes. Present at low levels in flowers, leaves and stems.

It carries out the reaction (2E,6E)-farnesyl diphosphate = bicyclogermacrene + diphosphate. The enzyme catalyses (2E)-geranyl diphosphate = terpinolene + diphosphate. The catalysed reaction is (2E)-geranyl diphosphate = (4R)-limonene + diphosphate. It catalyses the reaction (2E)-geranyl diphosphate + H2O = (2E)-geraniol + diphosphate. It carries out the reaction (2E,6E)-farnesyl diphosphate = allo-aromadendrene + diphosphate. It participates in secondary metabolite biosynthesis; terpenoid biosynthesis. Its function is as follows. Involved in the biosynthesis of phenolic sesquiterpenes natural products. Sesquiterpene synthase converting (2E,6E)-farnesyl diphosphate (FPP) to alloaromadendrene and bicyclo-germacrene. The product formation is dependent on the metal ions present and in presence of manganese, bicyclo-germacrene is greatly favored while both alloaromadendrene and bicyclo-germacrene are produced in equivalent amounts in the presence of magnesium. Can also convert geranyl diphosphate (GPP) to terpinolene, limonene and geraniol, and this conversion is not affected by the presence of magnesium or manganese. The protein is Bicyclo-germacrene synthase (TPS4) of Origanum vulgare (Wild marjoram).